The sequence spans 229 residues: uncharacterized protein (229 aa).

This is an uncharacterized protein from Treponema pallidum (strain Nichols).